The following is a 144-amino-acid chain: Sirohydrochlorin cobaltochelatase (144 aa).

Residue His9 is the Proton acceptor of the active site. A Co(2+)-binding site is contributed by His9. His9 provides a ligand contact to Ni(2+). Residues Glu45 and 70-75 each bind substrate; that span reads LAPGNH. Co(2+) is bound at residue His75. His75 serves as a coordination point for Ni(2+). Residues 89 to 112 form a disordered region; it reads GDDEGGHHHHHDHEHHHHHHDTTA. The segment covering 95-108 has biased composition (basic residues); sequence HHHHHDHEHHHHHH.

This sequence belongs to the CbiX family. CbiXS subfamily. In terms of assembly, homotetramer; dimer of dimers.

The enzyme catalyses Co-sirohydrochlorin + 2 H(+) = sirohydrochlorin + Co(2+). It carries out the reaction Ni-sirohydrochlorin + 2 H(+) = sirohydrochlorin + Ni(2+). It participates in cofactor biosynthesis; adenosylcobalamin biosynthesis; cob(II)yrinate a,c-diamide from sirohydrochlorin (anaerobic route): step 1/10. In terms of biological role, catalyzes the insertion of Co(2+) into sirohydrochlorin as part of the anaerobic pathway to cobalamin biosynthesis. Involved in the biosynthesis of the unique nickel-containing tetrapyrrole coenzyme F430, the prosthetic group of methyl-coenzyme M reductase (MCR), which plays a key role in methanogenesis and anaerobic methane oxidation. Catalyzes the insertion of Ni(2+) into sirohydrochlorin to yield Ni-sirohydrochlorin. This is Sirohydrochlorin cobaltochelatase from Methanococcus maripaludis (strain DSM 14266 / JCM 13030 / NBRC 101832 / S2 / LL).